Here is a 339-residue protein sequence, read N- to C-terminus: Phenylalanine--tRNA ligase alpha subunit (339 aa).

Glutamate 254 contacts Mg(2+).

This sequence belongs to the class-II aminoacyl-tRNA synthetase family. Phe-tRNA synthetase alpha subunit type 1 subfamily. Tetramer of two alpha and two beta subunits. The cofactor is Mg(2+).

The protein resides in the cytoplasm. It catalyses the reaction tRNA(Phe) + L-phenylalanine + ATP = L-phenylalanyl-tRNA(Phe) + AMP + diphosphate + H(+). This chain is Phenylalanine--tRNA ligase alpha subunit, found in Clostridium botulinum (strain 657 / Type Ba4).